A 171-amino-acid chain; its full sequence is NADH-quinone oxidoreductase subunit I 2 (171 aa).

4Fe-4S ferredoxin-type domains are found at residues 39–71 (IVLT…LSKA) and 81–110 (EHFR…LTPD). Residues Cys51, Cys54, Cys57, Cys61, Cys90, Cys93, Cys96, and Cys100 each coordinate [4Fe-4S] cluster.

It belongs to the complex I 23 kDa subunit family. NDH-1 is composed of 14 different subunits. Subunits NuoA, H, J, K, L, M, N constitute the membrane sector of the complex. [4Fe-4S] cluster is required as a cofactor.

The protein resides in the cell inner membrane. It catalyses the reaction a quinone + NADH + 5 H(+)(in) = a quinol + NAD(+) + 4 H(+)(out). Its function is as follows. NDH-1 shuttles electrons from NADH, via FMN and iron-sulfur (Fe-S) centers, to quinones in the respiratory chain. The immediate electron acceptor for the enzyme in this species is believed to be ubiquinone. Couples the redox reaction to proton translocation (for every two electrons transferred, four hydrogen ions are translocated across the cytoplasmic membrane), and thus conserves the redox energy in a proton gradient. The chain is NADH-quinone oxidoreductase subunit I 2 from Rhodopseudomonas palustris (strain BisB18).